The sequence spans 336 residues: Ornithine carbamoyltransferase, catabolic (336 aa).

Carbamoyl phosphate-binding positions include 62–65 (STRT), glutamine 89, arginine 113, and 140–143 (HPTQ). L-ornithine is bound by residues asparagine 172, aspartate 236, and 240-241 (SM). Carbamoyl phosphate contacts are provided by residues 277–278 (CL) and arginine 322.

Belongs to the aspartate/ornithine carbamoyltransferase superfamily. OTCase family.

It localises to the cytoplasm. It carries out the reaction carbamoyl phosphate + L-ornithine = L-citrulline + phosphate + H(+). The protein operates within amino-acid degradation; L-arginine degradation via ADI pathway; carbamoyl phosphate from L-arginine: step 2/2. Functionally, reversibly catalyzes the transfer of the carbamoyl group from carbamoyl phosphate (CP) to the N(epsilon) atom of ornithine (ORN) to produce L-citrulline. The sequence is that of Ornithine carbamoyltransferase, catabolic (arcB) from Staphylococcus aureus (strain N315).